Here is a 364-residue protein sequence, read N- to C-terminus: tRNA 2-selenouridine synthase (364 aa).

Positions 14–137 constitute a Rhodanese domain; sequence LIADTPIIDV…LRQTAIQATI (124 aa). The active-site S-selanylcysteine intermediate is the Cys-97.

It belongs to the SelU family. As to quaternary structure, monomer.

It carries out the reaction 5-methylaminomethyl-2-thiouridine(34) in tRNA + selenophosphate + (2E)-geranyl diphosphate + H2O + H(+) = 5-methylaminomethyl-2-selenouridine(34) in tRNA + (2E)-thiogeraniol + phosphate + diphosphate. The catalysed reaction is 5-methylaminomethyl-2-thiouridine(34) in tRNA + (2E)-geranyl diphosphate = 5-methylaminomethyl-S-(2E)-geranyl-thiouridine(34) in tRNA + diphosphate. It catalyses the reaction 5-methylaminomethyl-S-(2E)-geranyl-thiouridine(34) in tRNA + selenophosphate + H(+) = 5-methylaminomethyl-2-(Se-phospho)selenouridine(34) in tRNA + (2E)-thiogeraniol. The enzyme catalyses 5-methylaminomethyl-2-(Se-phospho)selenouridine(34) in tRNA + H2O = 5-methylaminomethyl-2-selenouridine(34) in tRNA + phosphate. Involved in the post-transcriptional modification of the uridine at the wobble position (U34) of tRNA(Lys), tRNA(Glu) and tRNA(Gln). Catalyzes the conversion of 2-thiouridine (S2U-RNA) to 2-selenouridine (Se2U-RNA). Acts in a two-step process involving geranylation of 2-thiouridine (S2U) to S-geranyl-2-thiouridine (geS2U) and subsequent selenation of the latter derivative to 2-selenouridine (Se2U) in the tRNA chain. In Escherichia coli O157:H7, this protein is tRNA 2-selenouridine synthase.